Consider the following 515-residue polypeptide: 2-isopropylmalate synthase (515 aa).

Positions 5–267 (VIIFDTTLRD…STGIKHEEIH (263 aa)) constitute a Pyruvate carboxyltransferase domain. Positions 14, 202, 204, and 238 each coordinate Mn(2+). Residues 392–515 (KLNYLSVQSG…EMKQKKIATV (124 aa)) form a regulatory domain region.

This sequence belongs to the alpha-IPM synthase/homocitrate synthase family. LeuA type 1 subfamily. As to quaternary structure, homodimer. The cofactor is Mn(2+).

The protein resides in the cytoplasm. The enzyme catalyses 3-methyl-2-oxobutanoate + acetyl-CoA + H2O = (2S)-2-isopropylmalate + CoA + H(+). Its pathway is amino-acid biosynthesis; L-leucine biosynthesis; L-leucine from 3-methyl-2-oxobutanoate: step 1/4. Its function is as follows. Catalyzes the condensation of the acetyl group of acetyl-CoA with 3-methyl-2-oxobutanoate (2-ketoisovalerate) to form 3-carboxy-3-hydroxy-4-methylpentanoate (2-isopropylmalate). This is 2-isopropylmalate synthase from Vibrio parahaemolyticus serotype O3:K6 (strain RIMD 2210633).